The following is a 188-amino-acid chain: Putative 3-methyladenine DNA glycosylase (188 aa).

Belongs to the DNA glycosylase MPG family.

In Ehrlichia ruminantium (strain Gardel), this protein is Putative 3-methyladenine DNA glycosylase.